The following is a 216-amino-acid chain: MNVSILFDNFSMYMDGFYHTLLASVIALAGSFVLGVAVAVMRITVFKPLQWLGTAYVEFIRNIPLLLITFVFYFGLPNAGLRLDGFQAGTVALTIYTSAFIAEAIRAGIQSVSKGQMEAARSSGFTYSQAMLHIILPQAIKIVIPPLGNQFLNLVKNSSILGVVAGLDLMYQADLVSSSTLVVFDVYIFVALFYLVLTIPLSIGVNYLEKRLEKSY.

Residues 17 to 205 (FYHTLLASVI…VLTIPLSIGV (189 aa)) enclose the ABC transmembrane type-1 domain. 5 helical membrane-spanning segments follow: residues 21–41 (LLAS…VAVM), 63–83 (IPLL…GLRL), 85–105 (GFQA…AEAI), 132–152 (LHII…NQFL), and 181–201 (LVVF…TIPL).

This sequence belongs to the binding-protein-dependent transport system permease family. The complex is composed of two ATP-binding proteins (GlnQ), two transmembrane proteins (GlnM and GlnP) and a solute-binding protein (GlnH).

The protein resides in the cell membrane. Part of the ABC transporter complex GlnHMPQ involved in glutamine transport. Probably responsible for the translocation of the substrate across the membrane. This is Probable glutamine ABC transporter permease protein GlnM (glnM) from Bacillus subtilis (strain 168).